Here is a 137-residue protein sequence, read N- to C-terminus: Large ribosomal subunit protein uL16 (137 aa).

A compositionally biased stretch (basic residues) spans 1-17 (MLQPKRTKFRKTHKGRN). The disordered stretch occupies residues 1–24 (MLQPKRTKFRKTHKGRNRGLANSG).

This sequence belongs to the universal ribosomal protein uL16 family. As to quaternary structure, part of the 50S ribosomal subunit.

Functionally, binds 23S rRNA and is also seen to make contacts with the A and possibly P site tRNAs. The chain is Large ribosomal subunit protein uL16 from Aeromonas hydrophila subsp. hydrophila (strain ATCC 7966 / DSM 30187 / BCRC 13018 / CCUG 14551 / JCM 1027 / KCTC 2358 / NCIMB 9240 / NCTC 8049).